Reading from the N-terminus, the 355-residue chain is uncharacterized protein (355 aa).

The interval 1-61 (MNKKIEKNNN…PKRRGRRPKK (61 aa)) is disordered. Positions 18–37 (YESNTTDNQLIMKKNANSGS) are enriched in polar residues.

This is an uncharacterized protein from Acanthamoeba polyphaga mimivirus (APMV).